Here is a 201-residue protein sequence, read N- to C-terminus: Dephospho-CoA kinase (201 aa).

The DPCK domain maps to 6–201 (VMGLTGSIGM…RAIREKNPRG (196 aa)). Position 14-19 (14-19 (GMGKSA)) interacts with ATP.

It belongs to the CoaE family.

It localises to the cytoplasm. It catalyses the reaction 3'-dephospho-CoA + ATP = ADP + CoA + H(+). It participates in cofactor biosynthesis; coenzyme A biosynthesis; CoA from (R)-pantothenate: step 5/5. Catalyzes the phosphorylation of the 3'-hydroxyl group of dephosphocoenzyme A to form coenzyme A. The polypeptide is Dephospho-CoA kinase (Novosphingobium aromaticivorans (strain ATCC 700278 / DSM 12444 / CCUG 56034 / CIP 105152 / NBRC 16084 / F199)).